The sequence spans 622 residues: Chaperone protein HscA homolog (622 aa).

Belongs to the heat shock protein 70 family.

In terms of biological role, chaperone involved in the maturation of iron-sulfur cluster-containing proteins. Has a low intrinsic ATPase activity which is markedly stimulated by HscB. The polypeptide is Chaperone protein HscA homolog (Burkholderia orbicola (strain MC0-3)).